A 168-amino-acid polypeptide reads, in one-letter code: Putative ankyrin repeat protein RBE_1411 (168 aa).

ANK repeat units lie at residues Thr-59 to Lys-88, Tyr-98 to Ile-127, and Lys-131 to Asn-160.

This is Putative ankyrin repeat protein RBE_1411 from Rickettsia bellii (strain RML369-C).